A 510-amino-acid polypeptide reads, in one-letter code: Hydroperoxide bicyclase CYP5164A3, mitochondrial (510 aa).

The N-terminal 31 residues, methionine 1–arginine 31, are a transit peptide targeting the mitochondrion. Position 452 (cysteine 452) interacts with heme.

This sequence belongs to the cytochrome P450 family. The cofactor is heme.

It localises to the mitochondrion. It carries out the reaction (13S)-hydroperoxy-(9Z,11E,15Z)-octadecatrienoate = plasmodiophorol A. It catalyses the reaction (13S)-hydroperoxy-(9Z,11E,15Z)-octadecatrienoate = plasmodiophorol B. The enzyme catalyses (13S)-hydroperoxy-(9Z,11E,15Z)-octadecatrienoate = ectocarpin A + H2O. The catalysed reaction is (15S)-hydroperoxy-(5Z,8Z,11Z,13E,17Z)-eicosapentaenoate = ectocarpin B + H2O. It carries out the reaction (15S)-hydroperoxy-(5Z,8Z,11Z,13E,17Z)-eicosapentaenoate = ectocarpin C. It catalyses the reaction (15S)-hydroperoxy-(5Z,8Z,11Z,13E,17Z)-eicosapentaenoate + H2O = ectocarpin D. The enzyme catalyses (15S)-hydroperoxy-(5Z,8Z,11Z,13E,17Z)-eicosapentaenoate = 14-oxo-15-hydroxy-(5Z,8Z,11Z,17Z)-eicosatetraenoate. Its pathway is lipid metabolism; oxylipin biosynthesis. Cytochrome P450 hydroperoxide bicyclase involved in the metabolism of oxylipins 'ectocarpins' natural products, such as hybridalactone, ecklonilactones and derivatives. Isomerizes the hydroperoxides into epoxyalcohols via epoxyallylic radical. Can use alpha-linolenic acid 13(S)-hydroperoxide (13-HPOTE) and eicosapentaenoic acid 15(S)-hydroperoxide (15-HPEPE) as preferred substrate to produce corresponding heterobicyclic oxylipins, such as plasmodiophorol A (6-oxabicyclo[3.1.0]hexane), plasmodiophorol B (2-oxabicyclo[2.2.1]heptane) and plasmodiophorol C (4-hydroxymethyl-1,2-dihydroxycyclopentane) as well as ectocarpin A (3-propenyl-6-oxabicyclo[3.1.0]hexane) formed at about 15:3:3:1 ratio for 13-HPOTE, and analogous to plasmodiophorols A and B including ectocarpin B (3-[(1'E)-propenyl]-6-oxabicyclo[3.1.0]hexane), ectocarpin C, 14-oxo-15-hydroxy-5,8,11,17-eicosate-traenoic acid and ectocarpin D for 15-HPEPE. Barely able to use linoleic acid 13-hydroperoxide (13-HPODE), linoleic acid 9-hydroperoxide (9-HPODE), eicosapentaenoic acid 15-hydroperoxide (15-HPEPE), and alpha-linolenic acid 9-hydroperoxide (9-HPOTE) as substrates. In Ectocarpus siliculosus (Brown alga), this protein is Hydroperoxide bicyclase CYP5164A3, mitochondrial.